Reading from the N-terminus, the 493-residue chain is Beta-amyrin 11-oxidase (493 aa).

Residues C7 to F23 form a helical membrane-spanning segment. Residue C439 participates in heme binding.

This sequence belongs to the cytochrome P450 family. It depends on heme as a cofactor. Expressed in roots and stolons. Not detected in leaves and stems.

The protein localises to the membrane. The enzyme catalyses beta-amyrin + 2 reduced [NADPH--hemoprotein reductase] + 2 O2 = 11-oxo-beta-amyrin + 2 oxidized [NADPH--hemoprotein reductase] + 3 H2O + 2 H(+). It carries out the reaction beta-amyrin + reduced [NADPH--hemoprotein reductase] + O2 = 11alpha-hydroxy-beta-amyrin + oxidized [NADPH--hemoprotein reductase] + H2O + H(+). The catalysed reaction is 11alpha-hydroxy-beta-amyrin + reduced [NADPH--hemoprotein reductase] + O2 = 11-oxo-beta-amyrin + oxidized [NADPH--hemoprotein reductase] + 2 H2O + H(+). In terms of biological role, involved in the biosynthesis of Glycyrrhetinic acid (GA), a natural product which exhibits anti-inflammatory activity. Catalyzes 2 successive oxidations of beta-amyrin, producing a precursor of the triterpene sweetener glycyrrhizin. Unable to use 11-deoxoglycyrrhetinic acid or ent-kaurenoic acid as substrates. The protein is Beta-amyrin 11-oxidase of Glycyrrhiza uralensis (Chinese licorice).